The primary structure comprises 213 residues: MAKNYYDITLALSGICQSARLVQQLAHQGHCDADALHVSLNSVIDMNPNSTLGVFGGSEANLRLGLETLLGVLNASSRQGLNAELTRYTLSLMVLERKLSSAKGALNTLGDRINGLQRQLDHFDLQSDTLMSAMAGIYVDVISPLGPRIQVTGSPAVLQSPQVQAKVRASLLAGIRAAVLWHQVGGGRLQLMFSRHRLTTQAKQILAHLTPEL.

A coiled-coil region spans residues 79–122; sequence QGLNAELTRYTLSLMVLERKLSSAKGALNTLGDRINGLQRQLDH.

It belongs to the HflD family.

It is found in the cytoplasm. Its subcellular location is the cell inner membrane. This Salmonella dublin (strain CT_02021853) protein is High frequency lysogenization protein HflD homolog.